Here is a 146-residue protein sequence, read N- to C-terminus: Extracellular globin-2A (146 aa).

Positions 4-146 constitute a Globin domain; sequence HCGPLQRLKV…EVIYPGIKHD (143 aa). Cys5 and Cys134 are disulfide-bonded. His97 is a heme b binding site.

Belongs to the globin family. As to quaternary structure, disulfide bonded trimer of chains IIA, IIB, and IIC.

This Tylorrhynchus heterochetus (Japanese palolo worm) protein is Extracellular globin-2A.